A 184-amino-acid chain; its full sequence is MAKYNDKELAETSKFLSFVLRHKPEAIGIVLDREGWADIDKLILCAQKAGKRLTRALLDTVVATSDKKRFSYSSDGTCIRAVQGHSTSQVAIAFIEKTPPQFLYHGTASRFLDEIKKQGLIAGERHYVHLSADEATARKVGARHGSPVILTVKAQEMAKRGIPFWQAENGVWLTSTVAVEFLEW.

Belongs to the KptA/TPT1 family.

Functionally, removes the 2'-phosphate from RNA via an intermediate in which the phosphate is ADP-ribosylated by NAD followed by a presumed transesterification to release the RNA and generate ADP-ribose 1''-2''-cyclic phosphate (APPR&gt;P). May function as an ADP-ribosylase. The protein is Probable RNA 2'-phosphotransferase of Escherichia coli O6:K15:H31 (strain 536 / UPEC).